We begin with the raw amino-acid sequence, 42 residues long: Crotamine Ile-19 (42 aa).

3 disulfide bridges follow: Cys4-Cys36, Cys11-Cys30, and Cys18-Cys37.

Belongs to the crotamine-myotoxin family. Monomer. As to expression, expressed by the venom gland.

It is found in the secreted. In terms of biological role, cationic peptide that possesses multiple functions. It acts as a cell-penetrating peptide (CPP), and as a potent voltage-gated potassium channel (Kv) inhibitor, it induces severe muscle necrosis by a non-enzymatic mechanism and exhibits antimicrobial activities. It also elicits a short-lasting hyperextension of the hind limb. It does not cause observable tissue damage (whereas the whole venom causes severe myonecrosis accompanied by edema and hemorrhage). The chain is Crotamine Ile-19 from Crotalus durissus ruruima (South American rattlesnake).